Here is a 144-residue protein sequence, read N- to C-terminus: Large ribosomal subunit protein uL15 (144 aa).

The disordered stretch occupies residues 1–48; that stretch reads MIKLESLQDPSPRKRRTKLLGRGPSSGHGKTSCRGHKGDGSRSGYKRR.

It belongs to the universal ribosomal protein uL15 family. As to quaternary structure, part of the 50S ribosomal subunit.

Functionally, binds to the 23S rRNA. This is Large ribosomal subunit protein uL15 from Chlamydia caviae (strain ATCC VR-813 / DSM 19441 / 03DC25 / GPIC) (Chlamydophila caviae).